Reading from the N-terminus, the 305-residue chain is Sulfate adenylyltransferase subunit 2 (305 aa).

Belongs to the PAPS reductase family. CysD subfamily. In terms of assembly, heterodimer composed of CysD, the smaller subunit, and CysN.

It catalyses the reaction sulfate + ATP + H(+) = adenosine 5'-phosphosulfate + diphosphate. The protein operates within sulfur metabolism; hydrogen sulfide biosynthesis; sulfite from sulfate: step 1/3. In terms of biological role, with CysN forms the ATP sulfurylase (ATPS) that catalyzes the adenylation of sulfate producing adenosine 5'-phosphosulfate (APS) and diphosphate, the first enzymatic step in sulfur assimilation pathway. APS synthesis involves the formation of a high-energy phosphoric-sulfuric acid anhydride bond driven by GTP hydrolysis by CysN coupled to ATP hydrolysis by CysD. This is Sulfate adenylyltransferase subunit 2 from Pseudomonas putida (strain ATCC 700007 / DSM 6899 / JCM 31910 / BCRC 17059 / LMG 24140 / F1).